The primary structure comprises 355 residues: Peptide chain release factor 1 (355 aa).

Q230 carries the N5-methylglutamine modification.

The protein belongs to the prokaryotic/mitochondrial release factor family. Post-translationally, methylated by PrmC. Methylation increases the termination efficiency of RF1.

It is found in the cytoplasm. Peptide chain release factor 1 directs the termination of translation in response to the peptide chain termination codons UAG and UAA. The polypeptide is Peptide chain release factor 1 (Geobacter sulfurreducens (strain ATCC 51573 / DSM 12127 / PCA)).